We begin with the raw amino-acid sequence, 89 residues long: Cell division topological specificity factor (89 aa).

This sequence belongs to the MinE family.

Its function is as follows. Prevents the cell division inhibition by proteins MinC and MinD at internal division sites while permitting inhibition at polar sites. This ensures cell division at the proper site by restricting the formation of a division septum at the midpoint of the long axis of the cell. The sequence is that of Cell division topological specificity factor from Brucella anthropi (strain ATCC 49188 / DSM 6882 / CCUG 24695 / JCM 21032 / LMG 3331 / NBRC 15819 / NCTC 12168 / Alc 37) (Ochrobactrum anthropi).